The following is a 216-amino-acid chain: MEVIHLGAEHSLLNRFVMEMRDVTIQNDRLRFRRNIERVGEVMAYEISKKMTQQVRTVTTPLGEAECSVPQDKVVLATILRAGLPFHHGFLNYFDYCENAFVSAYRKYKDRLNFDIHIEYIASPDITDKVLIISDPMLATGSSMELAYKALLTKGNPKHIHIASIIASQQAVDYIRGVMPDNTTIWIAAIDPTIDEHSYIVPGLGDAGDLAYGEKL.

Residues Arg-81, Arg-106, and 135 to 143 contribute to the 5-phospho-alpha-D-ribose 1-diphosphate site; that span reads DPMLATGSS. Uracil is bound by residues Ile-200 and 205 to 207; that span reads GDA. Asp-206 serves as a coordination point for 5-phospho-alpha-D-ribose 1-diphosphate.

This sequence belongs to the UPRTase family. Mg(2+) serves as cofactor.

It catalyses the reaction UMP + diphosphate = 5-phospho-alpha-D-ribose 1-diphosphate + uracil. It participates in pyrimidine metabolism; UMP biosynthesis via salvage pathway; UMP from uracil: step 1/1. Its activity is regulated as follows. Allosterically activated by GTP. Functionally, catalyzes the conversion of uracil and 5-phospho-alpha-D-ribose 1-diphosphate (PRPP) to UMP and diphosphate. The polypeptide is Uracil phosphoribosyltransferase (upp) (Porphyromonas gingivalis (strain ATCC 33277 / DSM 20709 / CIP 103683 / JCM 12257 / NCTC 11834 / 2561)).